Here is a 728-residue protein sequence, read N- to C-terminus: Cellulose synthase-like protein E6 (728 aa).

The next 2 helical transmembrane spans lie at 21-43 (AVYRLQAATVAAGILLVLYYRAT) and 53-73 (AAWLGMAAAELWFAVYWVITQ). Active-site residues include D141 and D446. A run of 5 helical transmembrane segments spans residues 523–543 (LWAANSLPTIYYVMIPALGLV), 546–566 (TPLFPEIMSPWATPFIYVFCV), 646–666 (PEFVIIATVALLNFVCLVAGL), 669–689 (IMAGVWNVFLPQVILCGLIVI), and 707–727 (IPLPVTLASIGFVMLAFLLPI).

It belongs to the glycosyltransferase 2 family. Plant cellulose synthase-like E subfamily.

It localises to the golgi apparatus membrane. Functionally, thought to be a Golgi-localized beta-glycan synthase that polymerize the backbones of noncellulosic polysaccharides (hemicelluloses) of plant cell wall. The chain is Cellulose synthase-like protein E6 (CSLE6) from Oryza sativa subsp. japonica (Rice).